We begin with the raw amino-acid sequence, 540 residues long: O-phosphoserine--tRNA(Cys) ligase (540 aa).

Substrate contacts are provided by residues 188–190 (HMT), 233–235 (SAS), 275–276 (YY), and N319.

The protein belongs to the class-II aminoacyl-tRNA synthetase family. O-phosphoseryl-tRNA(Cys) synthetase subfamily. In terms of assembly, homotetramer. Interacts with SepCysS.

It catalyses the reaction tRNA(Cys) + O-phospho-L-serine + ATP = O-phospho-L-seryl-tRNA(Cys) + AMP + diphosphate. Functionally, catalyzes the attachment of O-phosphoserine (Sep) to tRNA(Cys). The sequence is that of O-phosphoserine--tRNA(Cys) ligase from Methanococcus aeolicus (strain ATCC BAA-1280 / DSM 17508 / OCM 812 / Nankai-3).